Here is a 117-residue protein sequence, read N- to C-terminus: Large ribosomal subunit protein eL34 (117 aa).

It belongs to the eukaryotic ribosomal protein eL34 family. Component of the large ribosomal subunit.

Its subcellular location is the cytoplasm. The protein localises to the cytosol. The protein resides in the endoplasmic reticulum. Component of the large ribosomal subunit. The ribosome is a large ribonucleoprotein complex responsible for the synthesis of proteins in the cell. This Danio rerio (Zebrafish) protein is Large ribosomal subunit protein eL34 (rpl34).